The chain runs to 296 residues: Phosphoribosylaminoimidazole-succinocarboxamide synthase (296 aa).

This sequence belongs to the SAICAR synthetase family.

It carries out the reaction 5-amino-1-(5-phospho-D-ribosyl)imidazole-4-carboxylate + L-aspartate + ATP = (2S)-2-[5-amino-1-(5-phospho-beta-D-ribosyl)imidazole-4-carboxamido]succinate + ADP + phosphate + 2 H(+). It functions in the pathway purine metabolism; IMP biosynthesis via de novo pathway; 5-amino-1-(5-phospho-D-ribosyl)imidazole-4-carboxamide from 5-amino-1-(5-phospho-D-ribosyl)imidazole-4-carboxylate: step 1/2. In Desulfotalea psychrophila (strain LSv54 / DSM 12343), this protein is Phosphoribosylaminoimidazole-succinocarboxamide synthase.